The chain runs to 876 residues: Leucine--tRNA ligase (876 aa).

Positions 43 to 53 (PYPSGRIHMGH) match the 'HIGH' region motif. A 'KMSKS' region motif is present at residues 632-636 (KMSKS). Lys-635 contacts ATP.

It belongs to the class-I aminoacyl-tRNA synthetase family.

It localises to the cytoplasm. It carries out the reaction tRNA(Leu) + L-leucine + ATP = L-leucyl-tRNA(Leu) + AMP + diphosphate. This chain is Leucine--tRNA ligase, found in Rhizobium etli (strain CIAT 652).